Here is a 178-residue protein sequence, read N- to C-terminus: Caveolin-1 (178 aa).

Serine 2 bears the N-acetylserine mark. Phosphoserine is present on serine 2. The segment at 2–94 (SGGKYVDSEG…WKASFTTFTV (93 aa)) is required for homooligomerization. Residues 2–104 (SGGKYVDSEG…TKYWFYRLLS (103 aa)) lie on the Cytoplasmic side of the membrane. Lysine 5 carries the N6-acetyllysine; alternate modification. Lysine 5 participates in a covalent cross-link: Glycyl lysine isopeptide (Lys-Gly) (interchain with G-Cter in ubiquitin); alternate. Tyrosine 6 carries the post-translational modification Phosphotyrosine. Serine 9 is modified (phosphoserine). The residue at position 14 (tyrosine 14) is a Phosphotyrosine; by ABL1. A Phosphotyrosine modification is found at tyrosine 25. Glycyl lysine isopeptide (Lys-Gly) (interchain with G-Cter in ubiquitin) cross-links involve residues lysine 26, lysine 30, lysine 39, lysine 47, and lysine 57. Residues 82–94 (DGIWKASFTTFTV) form an interaction with CAVIN3 region. The segment at residues 105-125 (TLFGIPMALIWGIYFAILSFL) is an intramembrane region (helical). The Cytoplasmic segment spans residues 126–178 (HIWAVVPCIKSFLIEIQCIGRVYSIYIHTFCDPLFEAVGKLFSNIRINMQKEI). The interacts with SPRY1, SPRY2, SPRY3 and SPRY4 stretch occupies residues 131–142 (VPCIKSFLIEIQ). S-palmitoyl cysteine attachment occurs at residues cysteine 133, cysteine 143, and cysteine 156. The segment at 149 to 160 (SIYIHTFCDPLF) is interacts with SPRY1, SPRY2, and SPRY4. The interval 167 to 178 (FSNIRINMQKEI) is interacts with SPRY1, SPRY2, SPRY3 and SPRY4.

The protein belongs to the caveolin family. Homooligomer. Interacts with GLIPR2. Interacts with NOSTRIN. Interacts with SNAP25 and STX1A. Interacts (via the N-terminus) with DPP4; the interaction is direct. Interacts with CTNNB1, CDH1 and JUP. Interacts with PACSIN2; this interaction induces membrane tubulation. Interacts with SLC7A9. Interacts with BMX and BTK. Interacts with TGFBR1. Interacts with CAVIN3 (via leucine-zipper domain) in a cholesterol-sensitive manner. Interacts with CAVIN1. Interacts with EHD2 in a cholesterol-dependent manner. Forms a ternary complex with UBXN6 and VCP; mediates CAV1 targeting to lysosomes for degradation. Interacts with ABCG1; this interaction regulates ABCG1-mediated cholesterol efflux. Interacts with NEU3; this interaction enhances NEU3 sialidase activity within caveola. Interacts (via C-terminus) with SPRY1, SPRY2 (via C-terminus), SPRY3, and SPRY4. Interacts with IGFBP5; this interaction allows trafficking of IGFBP5 from the plasma membrane to the nucleus. Phosphorylated at Tyr-14 by ABL1 in response to oxidative stress. In terms of processing, ubiquitinated. Undergo monoubiquitination and multi- and/or polyubiquitination. Monoubiquitination of N-terminal lysines promotes integration in a ternary complex with UBXN6 and VCP which promotes oligomeric CAV1 targeting to lysosomes for degradation. Ubiquitinated by ZNRF1; leading to degradation and modulation of the TLR4-mediated immune response.

The protein resides in the golgi apparatus membrane. It is found in the cell membrane. Its subcellular location is the membrane. The protein localises to the caveola. It localises to the membrane raft. Its function is as follows. May act as a scaffolding protein within caveolar membranes. Forms a stable heterooligomeric complex with CAV2 that targets to lipid rafts and drives caveolae formation. Mediates the recruitment of CAVIN proteins (CAVIN1/2/3/4) to the caveolae. Interacts directly with G-protein alpha subunits and can functionally regulate their activity. Involved in the costimulatory signal essential for T-cell receptor (TCR)-mediated T-cell activation. Its binding to DPP4 induces T-cell proliferation and NF-kappa-B activation in a T-cell receptor/CD3-dependent manner. Recruits CTNNB1 to caveolar membranes and may regulate CTNNB1-mediated signaling through the Wnt pathway. Negatively regulates TGFB1-mediated activation of SMAD2/3 by mediating the internalization of TGFBR1 from membrane rafts leading to its subsequent degradation. Binds 20(S)-hydroxycholesterol (20(S)-OHC). The protein is Caveolin-1 (CAV1) of Dasypus novemcinctus (Nine-banded armadillo).